Here is a 205-residue protein sequence, read N- to C-terminus: Molybdenum cofactor guanylyltransferase (205 aa).

GTP contacts are provided by residues Leu-14 to Gly-16, Lys-27, Asp-77, and Asp-107. A Mg(2+)-binding site is contributed by Asp-107.

The protein belongs to the MobA family. In terms of assembly, monomer. The cofactor is Mg(2+).

Its subcellular location is the cytoplasm. It catalyses the reaction Mo-molybdopterin + GTP + H(+) = Mo-molybdopterin guanine dinucleotide + diphosphate. Transfers a GMP moiety from GTP to Mo-molybdopterin (Mo-MPT) cofactor (Moco or molybdenum cofactor) to form Mo-molybdopterin guanine dinucleotide (Mo-MGD) cofactor. This chain is Molybdenum cofactor guanylyltransferase, found in Burkholderia ambifaria (strain ATCC BAA-244 / DSM 16087 / CCUG 44356 / LMG 19182 / AMMD) (Burkholderia cepacia (strain AMMD)).